A 331-amino-acid chain; its full sequence is F-box protein At2g26160 (331 aa).

In terms of domain architecture, F-box spans 4-52 (PEWSELPGDLINLTANRFSSISDVLRVRSICKPWRSAAATPKSFQCNLP).

The sequence is that of F-box protein At2g26160 from Arabidopsis thaliana (Mouse-ear cress).